Consider the following 414-residue polypeptide: Gamma-glutamyl phosphate reductase (414 aa).

Belongs to the gamma-glutamyl phosphate reductase family.

The protein localises to the cytoplasm. The catalysed reaction is L-glutamate 5-semialdehyde + phosphate + NADP(+) = L-glutamyl 5-phosphate + NADPH + H(+). Its pathway is amino-acid biosynthesis; L-proline biosynthesis; L-glutamate 5-semialdehyde from L-glutamate: step 2/2. Catalyzes the NADPH-dependent reduction of L-glutamate 5-phosphate into L-glutamate 5-semialdehyde and phosphate. The product spontaneously undergoes cyclization to form 1-pyrroline-5-carboxylate. This Thermoanaerobacter sp. (strain X514) protein is Gamma-glutamyl phosphate reductase.